Reading from the N-terminus, the 445-residue chain is Phosphoglucosamine mutase (445 aa).

Ser99 (phosphoserine intermediate) is an active-site residue. Mg(2+) is bound by residues Ser99, Asp242, Asp244, and Asp246. The residue at position 99 (Ser99) is a Phosphoserine.

It belongs to the phosphohexose mutase family. Mg(2+) is required as a cofactor. In terms of processing, activated by phosphorylation.

The enzyme catalyses alpha-D-glucosamine 1-phosphate = D-glucosamine 6-phosphate. Catalyzes the conversion of glucosamine-6-phosphate to glucosamine-1-phosphate. This Nitratiruptor sp. (strain SB155-2) protein is Phosphoglucosamine mutase.